The following is a 103-amino-acid chain: Large ribosomal subunit protein uL23 (103 aa).

Belongs to the universal ribosomal protein uL23 family. Part of the 50S ribosomal subunit. Contacts protein L29, and trigger factor when it is bound to the ribosome.

One of the early assembly proteins it binds 23S rRNA. One of the proteins that surrounds the polypeptide exit tunnel on the outside of the ribosome. Forms the main docking site for trigger factor binding to the ribosome. This is Large ribosomal subunit protein uL23 from Chlorobaculum tepidum (strain ATCC 49652 / DSM 12025 / NBRC 103806 / TLS) (Chlorobium tepidum).